A 247-amino-acid chain; its full sequence is ATP synthase subunit a, chloroplastic (247 aa).

Helical transmembrane passes span 38-58 (QVLITSWVVIAILLGSSIIAV), 95-115 (VPFIGTMFLFIFVSNWSGALL), 134-154 (INTTVALALLTSVAYFYAGLT), 199-219 (LVVVVLVSLVPLVVPIPVMFL), and 220-240 (GLFTSGIQALIFATLAAAYIG).

Belongs to the ATPase A chain family. As to quaternary structure, F-type ATPases have 2 components, CF(1) - the catalytic core - and CF(0) - the membrane proton channel. CF(1) has five subunits: alpha(3), beta(3), gamma(1), delta(1), epsilon(1). CF(0) has four main subunits: a, b, b' and c.

It is found in the plastid. Its subcellular location is the chloroplast thylakoid membrane. Functionally, key component of the proton channel; it plays a direct role in the translocation of protons across the membrane. This is ATP synthase subunit a, chloroplastic from Morus indica (Mulberry).